The following is a 469-amino-acid chain: UDP-N-acetylmuramate--L-alanine ligase (469 aa).

An ATP-binding site is contributed by 113–119 (GTHGKTT).

Belongs to the MurCDEF family.

It is found in the cytoplasm. The enzyme catalyses UDP-N-acetyl-alpha-D-muramate + L-alanine + ATP = UDP-N-acetyl-alpha-D-muramoyl-L-alanine + ADP + phosphate + H(+). Its pathway is cell wall biogenesis; peptidoglycan biosynthesis. Its function is as follows. Cell wall formation. The polypeptide is UDP-N-acetylmuramate--L-alanine ligase (Neisseria meningitidis serogroup A / serotype 4A (strain DSM 15465 / Z2491)).